Reading from the N-terminus, the 177-residue chain is Bifunctional protein PyrR (177 aa).

Positions 99-111 (VILVDDVIYKGRT) match the PRPP-binding motif.

Belongs to the purine/pyrimidine phosphoribosyltransferase family. PyrR subfamily.

It catalyses the reaction UMP + diphosphate = 5-phospho-alpha-D-ribose 1-diphosphate + uracil. Functionally, regulates the transcription of the pyrimidine nucleotide (pyr) operon in response to exogenous pyrimidines. Its function is as follows. Also displays a weak uracil phosphoribosyltransferase activity which is not physiologically significant. This chain is Bifunctional protein PyrR, found in Microcystis aeruginosa (strain NIES-843 / IAM M-2473).